We begin with the raw amino-acid sequence, 718 residues long: Polyribonucleotide nucleotidyltransferase (718 aa).

2 residues coordinate Mg(2+): Asp-496 and Asp-502. The KH domain occupies 563 to 622 (PRLLTIKIDPDMIGLVIGPGGKTIKGITEETGAKIDIEDDGTVTISAVDENKAKRARNIV). The 69-residue stretch at 632 to 700 (GDVYAGRVTR…NKGRINLTRL (69 aa)) folds into the S1 motif domain.

It belongs to the polyribonucleotide nucleotidyltransferase family. Mg(2+) is required as a cofactor.

It localises to the cytoplasm. It catalyses the reaction RNA(n+1) + phosphate = RNA(n) + a ribonucleoside 5'-diphosphate. Its function is as follows. Involved in mRNA degradation. Catalyzes the phosphorolysis of single-stranded polyribonucleotides processively in the 3'- to 5'-direction. The chain is Polyribonucleotide nucleotidyltransferase from Trichormus variabilis (strain ATCC 29413 / PCC 7937) (Anabaena variabilis).